We begin with the raw amino-acid sequence, 191 residues long: Ribonuclease HII (191 aa).

Positions 4–191 (YTAAGLDEVG…HRKTFLSKIQ (188 aa)) constitute an RNase H type-2 domain. Asp10, Glu11, and Asp106 together coordinate a divalent metal cation.

This sequence belongs to the RNase HII family. Requires Mn(2+) as cofactor. The cofactor is Mg(2+).

It localises to the cytoplasm. The catalysed reaction is Endonucleolytic cleavage to 5'-phosphomonoester.. Its function is as follows. Endonuclease that specifically degrades the RNA of RNA-DNA hybrids. The sequence is that of Ribonuclease HII from Prochlorococcus marinus (strain SARG / CCMP1375 / SS120).